A 293-amino-acid polypeptide reads, in one-letter code: Deubiquitinase OTUD6B (293 aa).

2 disordered regions span residues 1 to 43 and 57 to 114; these read MEEV…RRKQ and QKHE…LEKE. The 138-residue stretch at 147 to 284 folds into the OTU domain; sequence LQIKEISSDG…GEHYNSVEPL (138 aa). The tract at residues 152 to 158 is cys-loop; that stretch reads ISSDGHC. Residue Asp155 is part of the active site. The active-site Nucleophile is Cys158. A variable-loop region spans residues 219 to 229; it reads VADTAAWGGQL. A his-loop region spans residues 267–277; the sequence is YMRHAYGLGEH. His277 is an active-site residue.

The enzyme catalyses Thiol-dependent hydrolysis of ester, thioester, amide, peptide and isopeptide bonds formed by the C-terminal Gly of ubiquitin (a 76-residue protein attached to proteins as an intracellular targeting signal).. Its function is as follows. Deubiquitinating enzyme that may play a role in the ubiquitin-dependent regulation of different cellular processes. This is Deubiquitinase OTUD6B (otud6b) from Danio rerio (Zebrafish).